Reading from the N-terminus, the 240-residue chain is Nuclear receptor-interacting protein 3 (240 aa).

The polypeptide is Nuclear receptor-interacting protein 3 (Nrip3) (Mus musculus (Mouse)).